A 347-amino-acid polypeptide reads, in one-letter code: Eukaryotic translation initiation factor 3 subunit I (347 aa).

WD repeat units lie at residues 8–47 (GHER…RLGT), 50–89 (GHTG…CVAT), 149–190 (THEG…EYVD), 194–233 (LHEK…VLKK), and 291–330 (GHFG…FDFK). A Phosphoserine modification is found at Ser302.

This sequence belongs to the eIF-3 subunit I family. Component of the eukaryotic translation initiation factor 3 (eIF-3) complex.

Its subcellular location is the cytoplasm. Component of the eukaryotic translation initiation factor 3 (eIF-3) complex, which is involved in protein synthesis of a specialized repertoire of mRNAs and, together with other initiation factors, stimulates binding of mRNA and methionyl-tRNAi to the 40S ribosome. The eIF-3 complex specifically targets and initiates translation of a subset of mRNAs involved in cell proliferation. The polypeptide is Eukaryotic translation initiation factor 3 subunit I (Saccharomyces cerevisiae (strain YJM789) (Baker's yeast)).